A 554-amino-acid chain; its full sequence is Glucose-6-phosphate isomerase (554 aa).

The Proton donor role is filled by Glu-359. Active-site residues include His-390 and Lys-518.

Belongs to the GPI family.

Its subcellular location is the cytoplasm. The catalysed reaction is alpha-D-glucose 6-phosphate = beta-D-fructose 6-phosphate. Its pathway is carbohydrate biosynthesis; gluconeogenesis. The protein operates within carbohydrate degradation; glycolysis; D-glyceraldehyde 3-phosphate and glycerone phosphate from D-glucose: step 2/4. In terms of biological role, catalyzes the reversible isomerization of glucose-6-phosphate to fructose-6-phosphate. The sequence is that of Glucose-6-phosphate isomerase from Pseudomonas putida (strain ATCC 700007 / DSM 6899 / JCM 31910 / BCRC 17059 / LMG 24140 / F1).